The sequence spans 481 residues: Tryptophan--tRNA ligase, cytoplasmic (481 aa).

Residues 12-68 (SPLELFNSIAAQGELVRSLKAGNAPKDEIESAVKMLLSLKMNYKTAMGEEYKAGCPP) form the WHEP-TRS domain. The interval 65–85 (GCPPGNSTAGSNGDPDATKAS) is disordered. Residue K158 is modified to N6-succinyllysine. Residues 168 to 177 (PSSEAMHLGH) carry the 'HIGH' region motif. The short motif at 353–357 (KMSAS) is the 'KMSKS' region element. Phosphoserine is present on S355.

This sequence belongs to the class-I aminoacyl-tRNA synthetase family. As to quaternary structure, homodimer. Interacts with oxidized form of GAPDH. Proteolytic cleavage generates 2 forms; T1-TrpRS and T2-TrpRS.

Its subcellular location is the cytoplasm. The catalysed reaction is tRNA(Trp) + L-tryptophan + ATP = L-tryptophyl-tRNA(Trp) + AMP + diphosphate + H(+). Catalyzes the attachment of tryptophan to tRNA(Trp) in a two-step reaction: tryptophan is first activated by ATP to form Trp-AMP and then transferred to the acceptor end of the tRNA(Trp). Could also possess an angiostatic activity. This Rattus norvegicus (Rat) protein is Tryptophan--tRNA ligase, cytoplasmic.